We begin with the raw amino-acid sequence, 810 residues long: MKFNFNETEDAPDSRRSPTPKEPVRWVPLQSHPVFASLPSSQDEPAVSQLFPRNFMAWDGDSRVYYWDSRRYLLHRLSLRLGEPEPSSVLAAVPSKVMQPDLQVTFSVSKISINKSGSAVLLAGSDGICVMYLFGRASVIEDNVICRVVSIGSEIYTSSDSAITLLQASWHPDSDTHLGILSSDAVFRLFDLSSDTELPEQEYYLQPGEPGRSRTASSIYPADFSFGGDHLWDRFTVFILFTDGSIYILCPVVPFGSVYKWESVMEIYNDANMYGVKSSNSLAVSNSSLAIEWLEATFPDLTEQGTRGENILVVKAQPYALLDASLALQGPLYKASSGDGDEDFAVREAECKGRAVSLLYNLVSKDSILVTAWSAGQLQVDALVDEIQPVWISGNSSRLRMNSHNKIQGVAMICESNISELPVATSNLPLDHTVWLGHPPPLLRLAMVDLALPKMREGGSLVTLFADSLLPERIYSLHDGGIDSTVLHSLPFTSQASGKDEALKTPSVHTVLSTCQEESAVSPLLGFVPLSDSFGYSWIVAVLSSGECIVAEMKTWDLLLPIHVSTDKTVSSSAIEKKEQENSCIISKELLAGPKIRIAPHALPNQRSTPANSVEGRSILLDYVKLFHENYIEYAHKVHFELQHHAPNLKRIIDDQHQRLAEANEKISKVEKNQSFLEKRIDKAIERHDSLEQCLQRLRSLPGTHKKPLTRAELDFKSELDQYAGVEVDALQSSIETLRARVKKSTQKSHKGTVVAASQKKQYSKKNLIQDTQMSQLQSTLAKLSLMNSDNSKKVKIVESALKSQESSFM.

The interval 1–23 (MKFNFNETEDAPDSRRSPTPKEP) is disordered. Residues 646 to 748 (APNLKRIIDD…RARVKKSTQK (103 aa)) are a coiled coil.

Part of the nuclear pore complex (NPC). The NPC has an eight-fold symmetrical structure comprising a central transport channel and two rings, the cytoplasmic and nuclear rings, to which eight filaments are attached. The cytoplasmic filaments have loose ends, while the nuclear filaments are joined in a distal ring, forming a nuclear basket. NPCs are highly dynamic in configuration and composition, and can be devided in 3 subcomplexes, the NUP62 subcomplex, the NUP107-160 subcomplex and the NUP93 subcomplex, containing approximately 30 different nucleoporin proteins.

It is found in the nucleus envelope. Its subcellular location is the nucleus. The protein resides in the nuclear pore complex. Involved in the regulation of exportin-mediated nuclear protein export. Required for resistance mediated by multiple R proteins and for the appropriate nuclear accumulation of SNC1 and of the downstream defense signaling components EDS1 and NPR1. Not involved in salt tolerance, ethylene and auxin responses, but required for systemic acquired resistance. In Arabidopsis thaliana (Mouse-ear cress), this protein is Nuclear pore complex protein NUP88.